A 459-amino-acid polypeptide reads, in one-letter code: Ceramide glucosyltransferase 3 (459 aa).

Residues 77 to 97 (LIAIVGFVFVFCLYLIHIIAL) form a helical membrane-spanning segment. Residue D156 is a short sequence motif, D1. Position 208 (D208) is a short sequence motif, D2. Residue D302 is a short sequence motif, D3. D302 (proton acceptor) is an active-site residue. Positions 338-342 (RICRW) match the (Q/R)XXRW motif. Helical transmembrane passes span 367–387 (LIMA…ILIL) and 415–435 (FMLI…KALL).

The protein belongs to the glycosyltransferase 2 family. Expressed in pharyngeal intestinal valve, intestinal rectal valve and hypodermis.

It localises to the membrane. It carries out the reaction an N-acylsphing-4-enine + UDP-alpha-D-glucose = a beta-D-glucosyl-(1&lt;-&gt;1')-N-acylsphing-4-enine + UDP + H(+). The enzyme catalyses an N-acyl-15-methylhexadecasphing-4-enine + UDP-alpha-D-glucose = an N-acyl-1-beta-D-glucosyl-15-methylhexadecasphing-4-enine + UDP + H(+). It participates in lipid metabolism; sphingolipid metabolism. Functionally, catalyzes the first glycosylation step in glycosphingolipid biosynthesis, the transfer of glucose to ceramide to produce glucosylceramides (GlcCer). GlcCer are known to contribute to the physical properties and physiological functions of membranes and may regulate signal transduction. Seems to be the major active form in the nematode. Only branched-chain sphingoid bases like 15-methylhexadecasphing-4-enine are used for generating complex sphingolipids in Caenorhabditis elegans. Together with cgt-1, plays a role in the trafficking of proteins such as mig-14 to the cell membrane in intestinal cells. This is Ceramide glucosyltransferase 3 from Caenorhabditis elegans.